The following is a 220-amino-acid chain: Ribose-5-phosphate isomerase A (220 aa).

Substrate-binding positions include 28 to 31 (TGST), 81 to 84 (DGAD), and 94 to 97 (KGGG). The active-site Proton acceptor is Glu103. Lys121 provides a ligand contact to substrate.

This sequence belongs to the ribose 5-phosphate isomerase family. Homodimer.

The enzyme catalyses aldehydo-D-ribose 5-phosphate = D-ribulose 5-phosphate. It participates in carbohydrate degradation; pentose phosphate pathway; D-ribose 5-phosphate from D-ribulose 5-phosphate (non-oxidative stage): step 1/1. Its function is as follows. Catalyzes the reversible conversion of ribose-5-phosphate to ribulose 5-phosphate. In Leptothrix cholodnii (strain ATCC 51168 / LMG 8142 / SP-6) (Leptothrix discophora (strain SP-6)), this protein is Ribose-5-phosphate isomerase A.